A 444-amino-acid polypeptide reads, in one-letter code: Tol-Pal system protein TolB (444 aa).

The signal sequence occupies residues Met-1–Ala-19.

The protein belongs to the TolB family. The Tol-Pal system is composed of five core proteins: the inner membrane proteins TolA, TolQ and TolR, the periplasmic protein TolB and the outer membrane protein Pal. They form a network linking the inner and outer membranes and the peptidoglycan layer.

The protein resides in the periplasm. Functionally, part of the Tol-Pal system, which plays a role in outer membrane invagination during cell division and is important for maintaining outer membrane integrity. This is Tol-Pal system protein TolB from Rickettsia felis (strain ATCC VR-1525 / URRWXCal2) (Rickettsia azadi).